Reading from the N-terminus, the 127-residue chain is Large ribosomal subunit protein bL12 (127 aa).

The protein belongs to the bacterial ribosomal protein bL12 family. Homodimer. Part of the ribosomal stalk of the 50S ribosomal subunit. Forms a multimeric L10(L12)X complex, where L10 forms an elongated spine to which 2 to 4 L12 dimers bind in a sequential fashion. Binds GTP-bound translation factors.

In terms of biological role, forms part of the ribosomal stalk which helps the ribosome interact with GTP-bound translation factors. Is thus essential for accurate translation. This chain is Large ribosomal subunit protein bL12, found in Sinorhizobium fredii (strain NBRC 101917 / NGR234).